The chain runs to 315 residues: Voltage-dependent calcium channel gamma-3 subunit (315 aa).

The next 4 membrane-spanning stretches (helical) occupy residues 8–28 (IQMLITTVGAFAAFSLMTIAV), 104–124 (SSVFPILSVTLLFFGGLCVAA), 135–155 (ILSAGIFFVSAGLSNIIGIIV), and 181–201 (FGAFSFIIAEIVGVVAVHIYI). The tract at residues 232-253 (RRRSSSRSTEPRSRDLSPISKG) is disordered. Ser248 is modified (phosphoserine).

Belongs to the PMP-22/EMP/MP20 family. CACNG subfamily. The L-type calcium channel is composed of five subunits: alpha-1, alpha-2/delta, beta and gamma. Acts as an auxiliary subunit for AMPA-selective glutamate receptors (AMPARs). Found in a complex with GRIA1, GRIA2, GRIA3, GRIA4, CNIH2, CNIH3, CACNG2, CACNG4, CACNG5, CACNG7 and CACNG8. Interacts with AP4M1 and GRIA1; associates GRIA1 with the adaptor protein complex 4 (AP-4) to target GRIA1 to the somatodendritic compartment of neurons.

It is found in the membrane. In terms of biological role, regulates the trafficking to the somatodendritic compartment and gating properties of AMPA-selective glutamate receptors (AMPARs). Promotes their targeting to the cell membrane and synapses and modulates their gating properties by slowing their rates of activation, deactivation and desensitization. Does not show subunit-specific AMPA receptor regulation and regulates all AMPAR subunits. Thought to stabilize the calcium channel in an inactivated (closed) state. The protein is Voltage-dependent calcium channel gamma-3 subunit (Cacng3) of Mus musculus (Mouse).